The following is a 48-amino-acid chain: Light-harvesting polypeptide B-885 beta-1 chain (48 aa).

Residues 1 to 20 (AEDRKSLSGLTEQEAQEFGT) lie on the Cytoplasmic side of the membrane. A helical membrane pass occupies residues 21–43 (LYTQGVAFVAVIAVVAHALVWAW). Position 37 (His-37) interacts with a bacteriochlorophyll. The Periplasmic portion of the chain corresponds to 44–48 (RPWLQ).

It belongs to the antenna complex beta subunit family. In terms of assembly, the core complex is formed by different alpha and beta chains, binding bacteriochlorophyll molecules, and arranged most probably in tetrameric structures disposed around the reaction center. The non-pigmented gamma chains may constitute additional components.

It localises to the cell inner membrane. In terms of biological role, antenna complexes are light-harvesting systems, which transfer the excitation energy to the reaction centers. The chain is Light-harvesting polypeptide B-885 beta-1 chain from Rhodocyclus tenuis (Rhodospirillum tenue).